The primary structure comprises 935 residues: MGDVYVTSPTFVGHDTGSILAIDCHPSGKKFITCGQKARTSNGLVVVWNAEPVLDKKKASNENVPKLLFQVESQSQSNSCRWSPDGKRFAFGSDDSSVSVWEYVGLINSMGSITGGAQNVERYKECCVLRGHSMEVLTVEWSPNGKYLASGSIDYRIIIYNARKLPDRITVLNDIQLPVKGLSWDPIGKYLASLEGDKKLRFWATDSWQCVKSVTEPFESNIEETMLTRLDWSPDGKYLMTPAAVRSGKPLIKLIQRQTWKSDQFLAGHHKGTTCVRAMPRLIEANLKNGKRMQLTCAAVGSRDKSISIWVFPGTLKPLFVINNIFNHTVMDFAWCGRNLLACSQDGTVKVIHLSESVIGEMISNEAMSDLCYQIYSIRPPRYELTDKEEDESQDSFNLSDLSSSANNASFVTCPEDVLIKRKKLVAAQQSSDIQLTKSMEDNSKENESKNSEKTMMEERNKQIDVRKDGKRRIQPVFCGTTTADPMTSLSSEGKKTVAPPPAKRKALAPAVPAKKGEVDLEDSSDSDDDDEEEEEDMEISDIESVRNKKRKVPATTSQPMLALDLKKPALRPMEPKSLKTQEGTVLMEAPEQQPKLSQHVVDRKGMFVEIDNRWKHGGVETTQIKLIKKKQQTAENEDDMMDGERRVNHECLWMAVLGSPVIIVAANKHNVVLGCGDKCLRVYRTFCGTHIVSLRLDSLPVLIGVTEHAAYALTENGRLSTWNLKLGKAVVTRQPLFDCVEASTDNSLISADVSETGVPLIVFSNGSIFTFNVSLSCWIQAITTNVLGRLTSPISDAQLSCSNGTTNSAGPLVRLLKRMRKQATAPGVAPQVVKAVKESQLEQLLHCAEQLGNPQDYQTMLMLYVETLCEGGSEKKLKNILNDLSRSGAPMQVCGLRRSALYDDVTRMIKLKQPAIAARIVAGVAASTTTKSLF.

7 WD repeats span residues 14–58 (HDTG…DKKK), 72–111 (ESQS…NSMG), 131–170 (GHSM…DRIT), 174–213 (DIQL…CVKS), 222–261 (IEET…QTWK), 277–320 (RAMP…KPLF), and 325–362 (IFNH…IGEM). The disordered stretch occupies residues 431–556 (SSDIQLTKSM…RNKKRKVPAT (126 aa)). Over residues 439-468 (SMEDNSKENESKNSEKTMMEERNKQIDVRK) the composition is skewed to basic and acidic residues. Polar residues predominate over residues 480-492 (GTTTADPMTSLSS). Acidic residues predominate over residues 520 to 542 (DLEDSSDSDDDDEEEEEDMEISD).

The protein belongs to the WD repeat HIR1 family.

The protein resides in the nucleus. Required for replication-independent chromatin assembly and for the periodic repression of histone gene transcription during the cell cycle. The polypeptide is Protein HIRA (Caenorhabditis elegans).